A 78-amino-acid polypeptide reads, in one-letter code: Ferritin light chain (78 aa).

The 59-residue stretch at 1–59 (EAALHLEKGLNQALVDLHALGSARADPHLCDFLENHFLDEEVKLIKKMGDHLTNLRRLS) folds into the Ferritin-like diiron domain.

Belongs to the ferritin family. Oligomer of 24 subunits. There are two types of subunits: L (light) chain and H (heavy) chain. The major chain can be light or heavy, depending on the species and tissue type. The functional molecule forms a roughly spherical shell with a diameter of 12 nm and contains a central cavity into which the insoluble mineral iron core is deposited. Interacts with NCOA4.

It localises to the cytoplasmic vesicle. The protein localises to the autophagosome. Its subcellular location is the cytoplasm. It is found in the autolysosome. Stores iron in a soluble, non-toxic, readily available form. Important for iron homeostasis. Iron is taken up in the ferrous form and deposited as ferric hydroxides after oxidation. Also plays a role in delivery of iron to cells. Mediates iron uptake in capsule cells of the developing kidney. Delivery to lysosomes by the cargo receptor NCOA4 for autophagic degradation and release or iron. In Sus scrofa (Pig), this protein is Ferritin light chain (FTL).